Consider the following 309-residue polypeptide: Homoserine O-succinyltransferase (309 aa).

Cysteine 142 functions as the Acyl-thioester intermediate in the catalytic mechanism. 2 residues coordinate substrate: lysine 163 and serine 192. Histidine 235 acts as the Proton acceptor in catalysis. Glutamate 237 is a catalytic residue. Arginine 249 contacts substrate.

The protein belongs to the MetA family. As to quaternary structure, homodimer.

It is found in the cytoplasm. It carries out the reaction L-homoserine + succinyl-CoA = O-succinyl-L-homoserine + CoA. The protein operates within amino-acid biosynthesis; L-methionine biosynthesis via de novo pathway; O-succinyl-L-homoserine from L-homoserine: step 1/1. Functionally, transfers a succinyl group from succinyl-CoA to L-homoserine, forming succinyl-L-homoserine. This Salmonella arizonae (strain ATCC BAA-731 / CDC346-86 / RSK2980) protein is Homoserine O-succinyltransferase.